Here is a 280-residue protein sequence, read N- to C-terminus: MGLKKFKPITPGLRHLILPDFSEITKEEPEKSLLRPLKKSGGRNNFGHVTTRFRGGGHKRLYRIIDFRRDKDNIPAKVASIEYDPNRTARIALLHYADGEKRYIIAPEGLKVGDIVMSGENVDIKVGNNLPLKNIPDGTLIHNLELYPGRGGQLVRAAGTAAQILGKEGKWAYVRLPSGEIRLFDLNCRATIGQVSNVDHQNVSLGKAGRSRWLGRRPHVRGSAMNAVDHPHGGGEGKAPIGHPSPLTPWGKPTLGYKTRKKRKPSDRFIIQRANDKKEK.

A disordered region spans residues D229 to K280.

This sequence belongs to the universal ribosomal protein uL2 family. Part of the 50S ribosomal subunit. Forms a bridge to the 30S subunit in the 70S ribosome.

Its function is as follows. One of the primary rRNA binding proteins. Required for association of the 30S and 50S subunits to form the 70S ribosome, for tRNA binding and peptide bond formation. It has been suggested to have peptidyltransferase activity; this is somewhat controversial. Makes several contacts with the 16S rRNA in the 70S ribosome. This is Large ribosomal subunit protein uL2 from Dictyoglomus turgidum (strain DSM 6724 / Z-1310).